The following is a 359-amino-acid chain: Trans-enoyl reductase FSL5 (359 aa).

Residue 47–50 coordinates NADP(+); it reads IDGK. 134–141 lines the substrate pocket; it reads SGVGTIGL. NADP(+)-binding positions include 169–172, 192–195, tyrosine 210, and 257–258; these read STAT, SPHN, and LE. 277–281 is a binding site for substrate; that stretch reads GPTLL. 346 to 347 provides a ligand contact to NADP(+); that stretch reads VS.

It belongs to the zinc-containing alcohol dehydrogenase family. In terms of assembly, monomer.

It functions in the pathway secondary metabolite biosynthesis. Its function is as follows. Trans-enoyl reductase; part of the gene cluster that mediates the biosynthesis of fusarielins F, G and H, decaketide compounds with 5 methylations and a decaline core that act as mycoestrogens as they stimulate growth of MCF-7 breast cancer cells. The initial compound in the pathway is produced by the reducing polyketide synthase FSL1. FSL1 lacks an active enoyl reductase (ER) domain and biosynthesis of fusarielins relies on the trans-acting enoyl reductase FSL5, before it is released through hydrolysis catalyzed by the thioesterase FSL2. Fusarielins F, G, and H have a C11=C12 cis double bond and is fully reduced between C10 and C11 and between C12 and C13. FSL3 can be involved in the formation of the C11=C12 cis double bond by moving a hypothetical C10=C11 or C12=C13 trans double bond to form prefusarielin. Prefusarielin is oxygenated at C15 and C16 by the cytochrome P450 monooxygenase FSL4, resulting in fusarielin F, which subsequently is epoxidized into fusarielin G by the same enzyme. The final step in the pathway is a reduction of the carboxylic acid moiety to yield fusarielin H via a still undetermined mechanism. The protein is Trans-enoyl reductase FSL5 of Gibberella zeae (strain ATCC MYA-4620 / CBS 123657 / FGSC 9075 / NRRL 31084 / PH-1) (Wheat head blight fungus).